Here is a 55-residue protein sequence, read N- to C-terminus: Large ribosomal subunit protein bL33B (55 aa).

It belongs to the bacterial ribosomal protein bL33 family.

The protein is Large ribosomal subunit protein bL33B of Kineococcus radiotolerans (strain ATCC BAA-149 / DSM 14245 / SRS30216).